The sequence spans 156 residues: ATP synthase subunit b (156 aa).

Residues 7 to 29 (LFAQMVVFLVLAWFTMKFVWPPL) traverse the membrane as a helical segment.

The protein belongs to the ATPase B chain family. F-type ATPases have 2 components, F(1) - the catalytic core - and F(0) - the membrane proton channel. F(1) has five subunits: alpha(3), beta(3), gamma(1), delta(1), epsilon(1). F(0) has three main subunits: a(1), b(2) and c(10-14). The alpha and beta chains form an alternating ring which encloses part of the gamma chain. F(1) is attached to F(0) by a central stalk formed by the gamma and epsilon chains, while a peripheral stalk is formed by the delta and b chains.

The protein resides in the cell inner membrane. In terms of biological role, f(1)F(0) ATP synthase produces ATP from ADP in the presence of a proton or sodium gradient. F-type ATPases consist of two structural domains, F(1) containing the extramembraneous catalytic core and F(0) containing the membrane proton channel, linked together by a central stalk and a peripheral stalk. During catalysis, ATP synthesis in the catalytic domain of F(1) is coupled via a rotary mechanism of the central stalk subunits to proton translocation. Its function is as follows. Component of the F(0) channel, it forms part of the peripheral stalk, linking F(1) to F(0). This Burkholderia pseudomallei (strain 668) protein is ATP synthase subunit b.